The primary structure comprises 115 residues: MFAAPATMLVLAALAALSSAIPAAQTASKCSTGPVQCCDSVEHHTQPHVNNLLLGLEHFGLVKGLVGGLTGNVGIKCNPILLSSNDCTAQSVCCEHVHFKGNIAVGCTPANIDIL.

The N-terminal stretch at 1–20 (MFAAPATMLVLAALAALSSA) is a signal peptide. Cystine bridges form between Cys-30/Cys-93, Cys-37/Cys-87, Cys-38/Cys-77, and Cys-94/Cys-107.

The protein belongs to the fungal hydrophobin family. In terms of assembly, self-assembles to form functional amyloid fibrils called rodlets. Self-assembly into fibrillar rodlets occurs spontaneously at hydrophobic:hydrophilic interfaces and the rodlets further associate laterally to form amphipathic monolayers.

It localises to the secreted. Its subcellular location is the cell wall. Aerial growth, conidiation, and dispersal of filamentous fungi in the environment rely upon a capability of their secreting small amphipathic proteins called hydrophobins (HPBs) with low sequence identity. Class I can self-assemble into an outermost layer of rodlet bundles on aerial cell surfaces, conferring cellular hydrophobicity that supports fungal growth, development and dispersal; whereas Class II form highly ordered films at water-air interfaces through intermolecular interactions but contribute nothing to the rodlet structure. This is Class I hydrophobin 21 from Pleurotus ostreatus (strain PC15) (Oyster mushroom).